The chain runs to 367 residues: tRNA-specific 2-thiouridylase MnmA (367 aa).

ATP contacts are provided by residues 12–19 (GMSGGVDS) and methionine 38. Positions 98-100 (NPD) are interaction with target base in tRNA. Residue cysteine 103 is the Nucleophile of the active site. A disulfide bridge links cysteine 103 with cysteine 200. Glycine 128 contributes to the ATP binding site. The interval 150–152 (KDQ) is interaction with tRNA. Residue cysteine 200 is the Cysteine persulfide intermediate of the active site. Residues 312 to 313 (RY) are interaction with tRNA.

The protein belongs to the MnmA/TRMU family. As to quaternary structure, interacts with TusE.

Its subcellular location is the cytoplasm. The enzyme catalyses S-sulfanyl-L-cysteinyl-[protein] + uridine(34) in tRNA + AH2 + ATP = 2-thiouridine(34) in tRNA + L-cysteinyl-[protein] + A + AMP + diphosphate + H(+). In terms of biological role, catalyzes the 2-thiolation of uridine at the wobble position (U34) of tRNA(Lys), tRNA(Glu) and tRNA(Gln), leading to the formation of s(2)U34, the first step of tRNA-mnm(5)s(2)U34 synthesis. Sulfur is provided by IscS, via a sulfur-relay system. Binds ATP and its substrate tRNAs. This Serratia proteamaculans (strain 568) protein is tRNA-specific 2-thiouridylase MnmA.